A 98-amino-acid chain; its full sequence is Large ribosomal subunit protein uL23 (98 aa).

Belongs to the universal ribosomal protein uL23 family. Part of the 50S ribosomal subunit. Contacts protein L29, and trigger factor when it is bound to the ribosome.

Functionally, one of the early assembly proteins it binds 23S rRNA. One of the proteins that surrounds the polypeptide exit tunnel on the outside of the ribosome. Forms the main docking site for trigger factor binding to the ribosome. The protein is Large ribosomal subunit protein uL23 of Chromohalobacter salexigens (strain ATCC BAA-138 / DSM 3043 / CIP 106854 / NCIMB 13768 / 1H11).